The sequence spans 152 residues: Arginine repressor (152 aa).

This sequence belongs to the ArgR family.

The protein localises to the cytoplasm. The protein operates within amino-acid biosynthesis; L-arginine biosynthesis [regulation]. Functionally, regulates arginine biosynthesis genes. The protein is Arginine repressor of Caldicellulosiruptor bescii (strain ATCC BAA-1888 / DSM 6725 / KCTC 15123 / Z-1320) (Anaerocellum thermophilum).